A 418-amino-acid chain; its full sequence is MFHNTCGRKGRFARAMGMALAISVTLSGCSTVSDWFADEEELEIRRLKPIDAKFTPSVKWDRDIGDGVDHYFSRLRPVYAYENLYAADRHGSVVAMNPENGDVLWERDFAVFEGDGWWDSIARLWRSGASARIGGISVADRLLFVGTENGVVMALDYETGETKWEASVPGEVLAAPSADEGILVVNTGAGTLFGFDTRTGEQLWRHEGDTPPLTLRGISGPVAANGGALIGTPTGKLQVNLLESGILAWETVIATPTGATELERIVDLDTTPVLFGGTIYTVSYNGTLAAVELRSGRIIWKREYGSYRNLSIEGNSIFVVDNNSNIYALDRRNGVELWSQGSLKSRSVTAATPVGEHIVVGDNWGFVHWIEQETGQIVARVDVGGDDEDDAIYDAPLNVDGVVVTMTRNGVVAAISTL.

An N-terminal signal peptide occupies residues 1–28 (MFHNTCGRKGRFARAMGMALAISVTLSG). The N-palmitoyl cysteine moiety is linked to residue Cys-29. Residue Cys-29 is the site of S-diacylglycerol cysteine attachment.

It belongs to the BamB family. Part of the Bam complex.

Its subcellular location is the cell outer membrane. Its function is as follows. Part of the outer membrane protein assembly complex, which is involved in assembly and insertion of beta-barrel proteins into the outer membrane. This Alteromonas naphthalenivorans protein is Outer membrane protein assembly factor BamB.